Here is a 210-residue protein sequence, read N- to C-terminus: Cytochrome c4 (210 aa).

An N-terminal signal peptide occupies residues 1 to 20 (MNKVLVSLLLTLGITGMAHA). Positions 34, 37, 38, 86, 139, 142, 143, and 187 each coordinate heme c.

In terms of processing, binds 2 heme c groups covalently per subunit.

It localises to the periplasm. Diheme, high potential cytochrome c believed to be an intermediate electron donor to terminal oxidation systems. The polypeptide is Cytochrome c4 (cc4) (Stutzerimonas stutzeri (Pseudomonas stutzeri)).